The primary structure comprises 498 residues: MDTLLRTPNNLEFLHGFGVKVSAFSSVKSQKFGAKKFCEGLGSRSVCVKASSSALLELVPETKKENLDFELPMYDPSKGVVVDLAVVGGGPAGLAVAQQVSEAGLSVCSIDPNPKLIWPNNYGVWVDEFEAMDLLDCLDATWSGATVYIDDNTTKDLNRPYGRVNRKQLKSKMMQKCILNGVKFHQAKVIKVIHEESKSMLICNDGITIQATVVLDATGFSRSLVQYDKPYNPGYQVAYGILAEVEEHPFDVNKMVFMDWRDSHLKNNVELKERNSRIPTFLYAMPFSSNRIFLEETSLVARPGLGMDDIQERMVARLSHLGIKVKSIEEDEHCVIPMGGPLPVLPQRVVGIGGTAGMVHPSTGYMVARTLAAAPVVANAIIQYLSSERSHSGDELSAAVWKDLWPIERRRQREFFCFGMDILLKLDLPATRRFFDAFFDLEPRYWHGFLSSRLFLPELIVFGLSLFSHASNTSRLEIMTKGTLPLVHMINNLLQDKE.

Residues 1 to 79 constitute a chloroplast and chromoplast transit peptide; sequence MDTLLRTPNN…ELPMYDPSKG (79 aa). Residue 84–112 coordinates NAD(+); that stretch reads LAVVGGGPAGLAVAQQVSEAGLSVCSIDP. Positions 293–297 match the FLEET motif motif; the sequence is FLEET.

Belongs to the lycopene cyclase family. In terms of assembly, monomer. FAD is required as a cofactor. Requires NADPH as cofactor.

The protein resides in the plastid. The protein localises to the chloroplast. It is found in the chromoplast. The catalysed reaction is a carotenoid psi-end group = a carotenoid beta-end derivative. It carries out the reaction all-trans-lycopene = gamma-carotene. It catalyses the reaction gamma-carotene = all-trans-beta-carotene. The enzyme catalyses all-trans-neurosporene = beta-zeacarotene. The catalysed reaction is beta-zeacarotene = 7,8-dihydro-beta-carotene. Its pathway is carotenoid biosynthesis; beta-carotene biosynthesis. The protein operates within carotenoid biosynthesis; beta-zeacarotene biosynthesis. In terms of biological role, catalyzes the double cyclization reaction which converts lycopene to beta-carotene. Catalyzes the double cyclization reaction which converts neurosporene to 7,8-dihydro-beta-carotene. This is Lycopene beta cyclase, chloroplastic/chromoplastic from Capsicum annuum (Capsicum pepper).